The primary structure comprises 375 residues: Non-structural protein NS5 (375 aa).

The polypeptide is Non-structural protein NS5 (NS-5) (Rottboellia (Sorghum)).